The chain runs to 473 residues: MHSLTTHKHVRGGDMTIRTRFAPSPTGLLHVGGARTALFNYLFARHHGGEYLLRIEDTDRARSTPEAVQVILDGLDWLGLSPDQEPVFQSTRETRHTEVAHSLLERGMAYRCFLSPEELQAQRDQAAADKRPLRINSPWRDRDLSEAPSGIAPVIRLRVPQEGETVVDDLVQGPVRVANAELDDMIILRSDGTPTYLHAVVVDDHDMAITHVIRGDDHLTNTFRQVQIFKALGWDLPRFAHIPLIHGADGAKLSKRHGAVSVLEFEREGFLPEALCNYLLRLGWGHGDAEILSRDEQVALFDLDGVGRAASRMDYAKLTHLNGVYLREADDQRLTTDLCRRLDLSPDSDASSRIRRLMPKLKERARTLVDLAESARFVIERPSGPKDAKAAALLSDEARGWLRALLPQLQATDFSAAAVDQALRAFAEEHGLKLGQIAQPLRVALTGGTTSPPIDATLEALGASEVTSRIEAV.

A 'HIGH' region motif is present at residues 23–33 (PSPTGLLHVGG). Positions 252 to 256 (KLSKR) match the 'KMSKS' region motif. Lys-255 contacts ATP.

The protein belongs to the class-I aminoacyl-tRNA synthetase family. Glutamate--tRNA ligase type 1 subfamily. In terms of assembly, monomer.

It localises to the cytoplasm. The catalysed reaction is tRNA(Glu) + L-glutamate + ATP = L-glutamyl-tRNA(Glu) + AMP + diphosphate. In terms of biological role, catalyzes the attachment of glutamate to tRNA(Glu) in a two-step reaction: glutamate is first activated by ATP to form Glu-AMP and then transferred to the acceptor end of tRNA(Glu). The sequence is that of Glutamate--tRNA ligase 1 from Granulibacter bethesdensis (strain ATCC BAA-1260 / CGDNIH1).